Consider the following 184-residue polypeptide: Photosystem I assembly protein Ycf4 (184 aa).

2 helical membrane passes run 22 to 42 (FCWA…GTSS) and 57 to 77 (IIFF…LFIS).

It belongs to the Ycf4 family.

Its subcellular location is the plastid. The protein localises to the chloroplast thylakoid membrane. Its function is as follows. Seems to be required for the assembly of the photosystem I complex. In Crucihimalaya wallichii (Rock-cress), this protein is Photosystem I assembly protein Ycf4.